The primary structure comprises 67 residues: MMSKLGALLTICLLLFPLTALPLDGDQPADRPAERMQDDISSEQHPLFDKERQCCTGSCLNCWPCCG.

An N-terminal signal peptide occupies residues 1-20 (MMSKLGALLTICLLLFPLTA). The propeptide occupies 21–52 (LPLDGDQPADRPAERMQDDISSEQHPLFDKER). Gln53 carries the pyrrolidone carboxylic acid modification. 3 disulfide bridges follow: Cys54-Cys66, Cys55-Cys62, and Cys59-Cys65. Pro64 is subject to 4-hydroxyproline. Cys66 is modified (cysteine amide).

It belongs to the conotoxin M superfamily. Expressed by the venom duct.

Its subcellular location is the secreted. The protein is Conotoxin VnMMSK-02 of Conus ventricosus (Mediterranean cone).